Consider the following 407-residue polypeptide: Peptidase T (407 aa).

H77 is a Zn(2+) binding site. D79 is an active-site residue. D138 provides a ligand contact to Zn(2+). E172 functions as the Proton acceptor in the catalytic mechanism. The Zn(2+) site is built by E173, D195, and H377.

The protein belongs to the peptidase M20B family. Zn(2+) is required as a cofactor.

The protein resides in the cytoplasm. The enzyme catalyses Release of the N-terminal residue from a tripeptide.. Functionally, cleaves the N-terminal amino acid of tripeptides. This chain is Peptidase T, found in Aeromonas hydrophila subsp. hydrophila (strain ATCC 7966 / DSM 30187 / BCRC 13018 / CCUG 14551 / JCM 1027 / KCTC 2358 / NCIMB 9240 / NCTC 8049).